Here is a 517-residue protein sequence, read N- to C-terminus: Benzoate 4-monooxygenase bphA (517 aa).

Residues L4–L24 form a helical membrane-spanning segment. 2 N-linked (GlcNAc...) asparagine glycosylation sites follow: N282 and N325. C461 is a binding site for heme.

This sequence belongs to the cytochrome P450 family. Requires heme as cofactor.

It localises to the membrane. It catalyses the reaction benzoate + reduced [NADPH--hemoprotein reductase] + O2 = 4-hydroxybenzoate + oxidized [NADPH--hemoprotein reductase] + H2O + H(+). Cytochrome P450 monooxygenase; part of the benzoic acid degradation pathway also known as the protocatechuic acid pathway. Benzoic acid debradation begins with the conversion of benzoic acid into 4-hydroxybenzoic acid through hydroxylation by the benzoate-4-monooxygenase bphA, and its partner NADPH-cytochrome P450 reductase cprA which act as a mediator in electron donation from NADPH. 4-Hydroxybenzoic acid is then converted into 3,4-dihydroxybenzoic acid (also called protocatechuic acid) by the p-hydroxybenzoate-m-hydroxylase phhA. Protocatechuic acid is converted into 3-carboxy-cis,cis-muconic acid by the intradiol ring-cleavage dioxygenase prcA, which is further metabolized through the 3-oxoadipate pathway to finally enter the tricarboxylic acid cycle (TCA). In terms of biological role, responsible for cytochrome P450 dependent benzoate hydroxylation in microsomes; requires cprA as the mediator in electron donation from NADPH. The sequence is that of Benzoate 4-monooxygenase bphA from Aspergillus niger.